The sequence spans 495 residues: Thiosulfate sulfurtransferase/rhodanese-like domain-containing protein 2 (495 aa).

Phosphoserine is present on serine 268. The Rhodanese domain occupies 300–395; that stretch reads EQGNTIILDC…YLEEFPDGFY (96 aa). Residue cysteine 354 is the Cysteine persulfide intermediate of the active site.

This Mus musculus (Mouse) protein is Thiosulfate sulfurtransferase/rhodanese-like domain-containing protein 2 (Tstd2).